A 108-amino-acid polypeptide reads, in one-letter code: PTS system cellobiose-specific EIIB component (108 aa).

The region spanning 3 to 108 (DKVIALACAA…VLAAAENLMN (106 aa)) is the PTS EIIB type-3 domain. Cys-10 (phosphocysteine intermediate) is an active-site residue. Position 10 is a phosphocysteine; by EIIA (Cys-10).

It carries out the reaction D-cellobiose(out) + N(pros)-phospho-L-histidyl-[protein] = 6-phospho-beta-D-glucosyl-(1-&gt;4)-D-glucose(in) + L-histidyl-[protein]. Its function is as follows. The phosphoenolpyruvate-dependent sugar phosphotransferase system (sugar PTS), a major carbohydrate active transport system, catalyzes the phosphorylation of incoming sugar substrates concomitantly with their translocation across the cell membrane. Involved in cellobiose transport with PtcA and CelB. This system can also transport lactose. In Lactococcus lactis subsp. lactis (strain IL1403) (Streptococcus lactis), this protein is PTS system cellobiose-specific EIIB component.